Consider the following 150-residue polypeptide: Large ribosomal subunit protein bL9 (150 aa).

The protein belongs to the bacterial ribosomal protein bL9 family.

Functionally, binds to the 23S rRNA. This is Large ribosomal subunit protein bL9 from Burkholderia vietnamiensis (strain G4 / LMG 22486) (Burkholderia cepacia (strain R1808)).